A 219-amino-acid chain; its full sequence is uncharacterized protein (219 aa).

This is an uncharacterized protein from Methanocaldococcus jannaschii (strain ATCC 43067 / DSM 2661 / JAL-1 / JCM 10045 / NBRC 100440) (Methanococcus jannaschii).